A 546-amino-acid polypeptide reads, in one-letter code: CTP synthase (546 aa).

Positions 1–267 are amidoligase domain; the sequence is MSKFVFVTGG…AQQTLELLNL (267 aa). Residue Ser13 coordinates CTP. Ser13 is a UTP binding site. Residues 14–19 and Asp71 each bind ATP; that span reads SIGKGI. Mg(2+)-binding residues include Asp71 and Glu141. CTP is bound by residues 148-150, 188-193, and Lys224; these read DIE and KTKPTQ. Residues 188-193 and Lys224 each bind UTP; that span reads KTKPTQ. In terms of domain architecture, Glutamine amidotransferase type-1 spans 292–534; that stretch reads EIAIVGKYVQ…MKAALKGREE (243 aa). Gly354 is an L-glutamine binding site. Cys381 (nucleophile; for glutamine hydrolysis) is an active-site residue. Residues 382–385, Glu405, and Arg462 contribute to the L-glutamine site; that span reads LGMQ. Active-site residues include His507 and Glu509.

This sequence belongs to the CTP synthase family. As to quaternary structure, homotetramer.

The enzyme catalyses UTP + L-glutamine + ATP + H2O = CTP + L-glutamate + ADP + phosphate + 2 H(+). It carries out the reaction L-glutamine + H2O = L-glutamate + NH4(+). It catalyses the reaction UTP + NH4(+) + ATP = CTP + ADP + phosphate + 2 H(+). It functions in the pathway pyrimidine metabolism; CTP biosynthesis via de novo pathway; CTP from UDP: step 2/2. Allosterically activated by GTP, when glutamine is the substrate; GTP has no effect on the reaction when ammonia is the substrate. The allosteric effector GTP functions by stabilizing the protein conformation that binds the tetrahedral intermediate(s) formed during glutamine hydrolysis. Inhibited by the product CTP, via allosteric rather than competitive inhibition. Its function is as follows. Catalyzes the ATP-dependent amination of UTP to CTP with either L-glutamine or ammonia as the source of nitrogen. Regulates intracellular CTP levels through interactions with the four ribonucleotide triphosphates. The sequence is that of CTP synthase from Microcystis aeruginosa (strain NIES-843 / IAM M-2473).